A 213-amino-acid chain; its full sequence is Probable transaldolase (213 aa).

The active-site Schiff-base intermediate with substrate is the Lys-83.

The protein belongs to the transaldolase family. Type 3B subfamily.

It localises to the cytoplasm. The catalysed reaction is D-sedoheptulose 7-phosphate + D-glyceraldehyde 3-phosphate = D-erythrose 4-phosphate + beta-D-fructose 6-phosphate. It participates in carbohydrate degradation; pentose phosphate pathway; D-glyceraldehyde 3-phosphate and beta-D-fructose 6-phosphate from D-ribose 5-phosphate and D-xylulose 5-phosphate (non-oxidative stage): step 2/3. In terms of biological role, transaldolase is important for the balance of metabolites in the pentose-phosphate pathway. This is Probable transaldolase from Desulfitobacterium hafniense (strain DSM 10664 / DCB-2).